We begin with the raw amino-acid sequence, 357 residues long: Dihydroorotate dehydrogenase (quinone) (357 aa).

FMN-binding positions include 67–71 (AGFDK) and Thr91. Lys71 serves as a coordination point for substrate. 116–120 (NRMGF) provides a ligand contact to substrate. 2 residues coordinate FMN: Asn153 and Asn186. Asn186 serves as a coordination point for substrate. The active-site Nucleophile is Ser189. Residue Asn191 participates in substrate binding. FMN contacts are provided by Lys228 and Thr256. 257–258 (NT) contacts substrate. Residues Gly282, Gly311, and 332–333 (YT) each bind FMN.

Belongs to the dihydroorotate dehydrogenase family. Type 2 subfamily. As to quaternary structure, monomer. The cofactor is FMN.

The protein resides in the cell membrane. It catalyses the reaction (S)-dihydroorotate + a quinone = orotate + a quinol. The protein operates within pyrimidine metabolism; UMP biosynthesis via de novo pathway; orotate from (S)-dihydroorotate (quinone route): step 1/1. Catalyzes the conversion of dihydroorotate to orotate with quinone as electron acceptor. The sequence is that of Dihydroorotate dehydrogenase (quinone) from Arthrobacter sp. (strain FB24).